A 114-amino-acid chain; its full sequence is RNA polymerase-binding protein RbpA (114 aa).

Belongs to the RNA polymerase-binding protein RbpA family. Monomer. Forms a complex with the RNAP catalytic core, specifically with the beta subunit (RpoB); its binding site may overlap with that of Rif. May bind free principal sigma factors.

Binds to RNA polymerase (RNAP), probably stimulating transcriptions from principal, but not alternative sigma factor promoters. Partially restores transcription in the presence of rifampicin (Rif) in vitro; overexpression leads to an increase in the Rif tolerance in vivo, with smaller colonies. Seems to act by removing Rif from its binding site and preventing its further binding. No longer stimulates transcription in Rif-resistant RNA polymerase (with mutations in rpoB). In Mycolicibacterium smegmatis (strain ATCC 700084 / mc(2)155) (Mycobacterium smegmatis), this protein is RNA polymerase-binding protein RbpA.